Here is a 102-residue protein sequence, read N- to C-terminus: Large ribosomal subunit protein uL24 (102 aa).

This sequence belongs to the universal ribosomal protein uL24 family. In terms of assembly, part of the 50S ribosomal subunit.

One of two assembly initiator proteins, it binds directly to the 5'-end of the 23S rRNA, where it nucleates assembly of the 50S subunit. Functionally, one of the proteins that surrounds the polypeptide exit tunnel on the outside of the subunit. The polypeptide is Large ribosomal subunit protein uL24 (Paraburkholderia xenovorans (strain LB400)).